Consider the following 219-residue polypeptide: MSIQVFCDFDGTITNNDNIMSIMEKFAPPEAEEVKNRILSQELSIQEGVSQLFQLIPTNLHDEIIQFLIETAEIRNGFHEFIQFVNENNISFYVISGGMDFFVYPLLQGLIPKEQIYCNETDFSNEYITVNWPHPCDRHCQNHCGLCKSSLIRKLGDTNDFHIVIGDSITDLQAAKQADKVFARDFLITKCEENHISYTPFETFHDVQTELKHLLEVKL.

This sequence belongs to the HAD-like hydrolase superfamily. MtnX family.

It carries out the reaction 2-hydroxy-5-methylsulfanyl-3-oxopent-1-enyl phosphate + H2O = 1,2-dihydroxy-5-(methylsulfanyl)pent-1-en-3-one + phosphate. It participates in amino-acid biosynthesis; L-methionine biosynthesis via salvage pathway; L-methionine from S-methyl-5-thio-alpha-D-ribose 1-phosphate: step 4/6. In terms of biological role, dephosphorylates 2-hydroxy-3-keto-5-methylthiopentenyl-1-phosphate (HK-MTPenyl-1-P) yielding 1,2-dihydroxy-3-keto-5-methylthiopentene (DHK-MTPene). In Bacillus thuringiensis subsp. konkukian (strain 97-27), this protein is 2-hydroxy-3-keto-5-methylthiopentenyl-1-phosphate phosphatase.